Consider the following 494-residue polypeptide: Prenylcysteine oxidase 1-like (494 aa).

Residues 1 to 22 (MARAAPLLAALTALLAAAAAGG) form the signal peptide. The N-linked (GlcNAc...) asparagine glycan is linked to Asn-342.

The protein belongs to the prenylcysteine oxidase family. FAD serves as cofactor.

It is found in the secreted. In terms of biological role, likely to have oxidoreductase activity. Required in the mevalonate pathway to regulate prenylation and enhances the bactericidal activity of neutrophils. This is Prenylcysteine oxidase 1-like (PCYOX1L) from Homo sapiens (Human).